Reading from the N-terminus, the 589-residue chain is Zinc finger protein 703 (589 aa).

Residues 102 to 315 (SQIGKPDPPP…GTGHIAPVSP (214 aa)) form a disordered region. Over residues 113-122 (SKLGSLSSSS) the composition is skewed to low complexity. Basic and acidic residues predominate over residues 137–148 (SGEHQNLDDKSS). A compositionally biased stretch (polar residues) spans 179-188 (NGSSSSVTCT). A compositionally biased stretch (low complexity) spans 196 to 206 (SPRASSPQQTS). Polar residues predominate over residues 214–230 (QSQSPLSQKTAHLQTTH). The segment covering 237-250 (GSDPGNDSSSSGSD) has biased composition (low complexity). Positions 251–262 (RNGKKDSDHNKS) are enriched in basic and acidic residues. Residues 272-299 (SSHARASVNSSSASSSSSPQPDSKTDSQ) show a composition bias toward low complexity. Residues 408–460 (VHDPSSALKSGFPLMYPTHHLHSLHPSSLSSSATSSLSHPLYTYGFMLPNETL) are required for interaction with Groucho and hdac2 plays an important role in repression of transcription. The C2H2-type zinc-finger motif lies at 462 to 490 (HACNWVSVGGPCDKRFATSEELLAHLRTH). The segment at 498-589 (GKLLSGYPSS…LGSASALGYQ (92 aa)) is required for self-association and nuclear localization.

It belongs to the Elbow/Noc family. In terms of assembly, self-associates. Interacts with nlz2. May interact with Groucho corepressor proteins.

The protein resides in the nucleus. Its subcellular location is the cytoplasm. Transcriptional corepressor which does not bind directly to DNA and may regulate transcription through recruitment of histone deacetylases to gene promoters. Required for segmental gene expression during hindbrain development. May regulate cell adhesion, migration and proliferation. The protein is Zinc finger protein 703 (znf703) of Danio rerio (Zebrafish).